The sequence spans 62 residues: High-potential iron-sulfur protein (62 aa).

[4Fe-4S] cluster is bound by residues Cys-22, Cys-25, Cys-40, and Cys-55.

It belongs to the high-potential iron-sulfur protein (HiPIP) family. Homodimer.

Its function is as follows. Specific class of high-redox-potential 4Fe-4S ferredoxins. Functions in anaerobic electron transport in most purple and in some other photosynthetic bacteria and in at least one genus (Paracoccus) of halophilic, denitrifying bacteria. The sequence is that of High-potential iron-sulfur protein (hip) from Rhodocyclus tenuis (Rhodospirillum tenue).